Consider the following 397-residue polypeptide: Chorismate synthase (397 aa).

Arg40 and Arg46 together coordinate NADP(+). FMN-binding positions include 129-131 (RAS), 257-258 (QA), Gly302, 317-321 (KPIAT), and Arg343.

Belongs to the chorismate synthase family. As to quaternary structure, homotetramer. FMNH2 is required as a cofactor.

The enzyme catalyses 5-O-(1-carboxyvinyl)-3-phosphoshikimate = chorismate + phosphate. Its pathway is metabolic intermediate biosynthesis; chorismate biosynthesis; chorismate from D-erythrose 4-phosphate and phosphoenolpyruvate: step 7/7. Its function is as follows. Catalyzes the anti-1,4-elimination of the C-3 phosphate and the C-6 proR hydrogen from 5-enolpyruvylshikimate-3-phosphate (EPSP) to yield chorismate, which is the branch point compound that serves as the starting substrate for the three terminal pathways of aromatic amino acid biosynthesis. This reaction introduces a second double bond into the aromatic ring system. The protein is Chorismate synthase of Chlorobium phaeobacteroides (strain BS1).